A 420-amino-acid polypeptide reads, in one-letter code: Glucose-1-phosphate adenylyltransferase (420 aa).

Alpha-D-glucose 1-phosphate-binding positions include Tyr107, Gly172, 187-188 (EK), and Ser205.

Belongs to the bacterial/plant glucose-1-phosphate adenylyltransferase family. As to quaternary structure, homotetramer.

The catalysed reaction is alpha-D-glucose 1-phosphate + ATP + H(+) = ADP-alpha-D-glucose + diphosphate. It functions in the pathway glycan biosynthesis; glycogen biosynthesis. Functionally, involved in the biosynthesis of ADP-glucose, a building block required for the elongation reactions to produce glycogen. Catalyzes the reaction between ATP and alpha-D-glucose 1-phosphate (G1P) to produce pyrophosphate and ADP-Glc. The polypeptide is Glucose-1-phosphate adenylyltransferase (Rhodopseudomonas palustris (strain BisB18)).